The chain runs to 470 residues: Probable V-type proton ATPase subunit H 2 (470 aa).

This sequence belongs to the V-ATPase H subunit family. V-ATPase is a heteromultimeric enzyme made up of two complexes: the ATP-hydrolytic V1 complex and the proton translocation V0 complex. The V1 complex consists of three catalytic AB heterodimers that form a heterohexamer, three peripheral stalks each consisting of EG heterodimers, one central rotor including subunits D and F, and the regulatory subunits C and H. The proton translocation complex V0 consists of the proton transport subunit a, a ring of proteolipid subunits c9c'', rotary subunit d, subunits e and f, and the accessory subunits vah-19/Ac45 and vah-20/PRR.

Functionally, subunit of the V1 complex of vacuolar(H+)-ATPase (V-ATPase), a multisubunit enzyme composed of a peripheral complex (V1) that hydrolyzes ATP and a membrane integral complex (V0) that translocates protons. V-ATPase is responsible for acidifying and maintaining the pH of intracellular compartments and in some cell types, is targeted to the plasma membrane, where it is responsible for acidifying the extracellular environment. Subunit H is essential for V-ATPase activity, but not for the assembly of the complex. This chain is Probable V-type proton ATPase subunit H 2, found in Caenorhabditis elegans.